Consider the following 159-residue polypeptide: MAKEGLPAVELPDASGLKVAVVTARWNAEICDRLHKHAVDAGRAAGATVSEYRVIGALELPVVVQELARTHDAVVALGCVVRGGTPHFDYVCDSVTEGLTRIALDTSTPIGNGVLTTNTEEQAVERSGGEGSVEDKGAEAMVAALDTALVLSQIRATEG.

5-amino-6-(D-ribitylamino)uracil-binding positions include Trp26, 57–59, and 79–81; these read ALE and CVV. Residue 84-85 coordinates (2S)-2-hydroxy-3-oxobutyl phosphate; the sequence is GT. The active-site Proton donor is His87. Asn112 serves as a coordination point for 5-amino-6-(D-ribitylamino)uracil. Residue Arg126 participates in (2S)-2-hydroxy-3-oxobutyl phosphate binding.

It belongs to the DMRL synthase family.

It catalyses the reaction (2S)-2-hydroxy-3-oxobutyl phosphate + 5-amino-6-(D-ribitylamino)uracil = 6,7-dimethyl-8-(1-D-ribityl)lumazine + phosphate + 2 H2O + H(+). The protein operates within cofactor biosynthesis; riboflavin biosynthesis; riboflavin from 2-hydroxy-3-oxobutyl phosphate and 5-amino-6-(D-ribitylamino)uracil: step 1/2. In terms of biological role, catalyzes the formation of 6,7-dimethyl-8-ribityllumazine by condensation of 5-amino-6-(D-ribitylamino)uracil with 3,4-dihydroxy-2-butanone 4-phosphate. This is the penultimate step in the biosynthesis of riboflavin. The chain is 6,7-dimethyl-8-ribityllumazine synthase from Corynebacterium glutamicum (strain ATCC 13032 / DSM 20300 / JCM 1318 / BCRC 11384 / CCUG 27702 / LMG 3730 / NBRC 12168 / NCIMB 10025 / NRRL B-2784 / 534).